The sequence spans 155 residues: Endoribonuclease YbeY (155 aa).

Zn(2+) is bound by residues histidine 114, histidine 118, and histidine 124.

This sequence belongs to the endoribonuclease YbeY family. It depends on Zn(2+) as a cofactor.

The protein localises to the cytoplasm. Functionally, single strand-specific metallo-endoribonuclease involved in late-stage 70S ribosome quality control and in maturation of the 3' terminus of the 16S rRNA. This chain is Endoribonuclease YbeY, found in Cronobacter sakazakii (strain ATCC BAA-894) (Enterobacter sakazakii).